The sequence spans 103 residues: Large ribosomal subunit protein bL21 (103 aa).

It belongs to the bacterial ribosomal protein bL21 family. Part of the 50S ribosomal subunit. Contacts protein L20.

In terms of biological role, this protein binds to 23S rRNA in the presence of protein L20. The polypeptide is Large ribosomal subunit protein bL21 (Borreliella afzelii (strain PKo) (Borrelia afzelii)).